Here is a 224-residue protein sequence, read N- to C-terminus: Protein HLJ1 (224 aa).

A J domain is found at 18 to 87 (DKHEFYEILK…RSIYDRIGRD (70 aa)). The segment covering 84–93 (IGRDPDDRQM) has biased composition (basic and acidic residues). The disordered stretch occupies residues 84–107 (IGRDPDDRQMPSRGAASGFRGSAG). The residue at position 109 (S109) is a Phosphoserine. The segment at 173-192 (NRGGSPFMRQQPRSRQQQQQ) is disordered. Residues 181–192 (RQQPRSRQQQQQ) show a composition bias toward low complexity.

This Saccharomyces cerevisiae (strain ATCC 204508 / S288c) (Baker's yeast) protein is Protein HLJ1 (HLJ1).